The primary structure comprises 1129 residues: Nuclear pore complex protein 15 (1129 aa).

The protein belongs to the nucleoporin Nup133 family.

The protein resides in the nucleus envelope. It is found in the nucleus. Its subcellular location is the nuclear pore complex. Important for early nematode development. This Caenorhabditis elegans protein is Nuclear pore complex protein 15.